The chain runs to 154 residues: Small ribosomal subunit protein bS16 (154 aa).

Residues 111 to 121 (AAAGLAEAPTK) show a composition bias toward low complexity. Positions 111–154 (AAAGLAEAPTKPAKKAAKAEAAPKTDEAAPKTEEQAGAGSGEQG) are disordered. The segment covering 127 to 144 (AKAEAAPKTDEAAPKTEE) has biased composition (basic and acidic residues).

This sequence belongs to the bacterial ribosomal protein bS16 family.

The chain is Small ribosomal subunit protein bS16 from Salinispora tropica (strain ATCC BAA-916 / DSM 44818 / JCM 13857 / NBRC 105044 / CNB-440).